A 562-amino-acid polypeptide reads, in one-letter code: Sensor histidine kinase MtrB (562 aa).

The next 2 helical transmembrane spans lie at 42-62 (VVAL…FVLT) and 213-233 (GTMA…ALLV). The HAMP domain maps to 235–287 (RQVVVPVRSASRIAERFAEGHLSERMPVRGEDDMARLAVSFNDMAESLSRQIT). Residues 302-519 (DVSHELRTPL…CFRLTLPLVR (218 aa)) form the Histidine kinase domain. The interval 526–562 (SPLPMKPILQPSPQASTAGQQHGTQRQRLREHAERSR) is disordered. Residues 536 to 551 (PSPQASTAGQQHGTQR) show a composition bias toward polar residues. The segment covering 553–562 (RLREHAERSR) has biased composition (basic and acidic residues).

The protein resides in the cell membrane. It catalyses the reaction ATP + protein L-histidine = ADP + protein N-phospho-L-histidine.. In terms of biological role, member of the two-component regulatory system MtrA/MtrB. Seems to function as a membrane-associated protein kinase that phosphorylates MtrA in response to environmental signals. This Mycobacterium leprae (strain TN) protein is Sensor histidine kinase MtrB (mtrB).